The sequence spans 206 residues: Ribosomal RNA large subunit methyltransferase E (206 aa).

S-adenosyl-L-methionine contacts are provided by G60, W62, D80, D96, and D121. The active-site Proton acceptor is the K161.

Belongs to the class I-like SAM-binding methyltransferase superfamily. RNA methyltransferase RlmE family.

The protein resides in the cytoplasm. The catalysed reaction is uridine(2552) in 23S rRNA + S-adenosyl-L-methionine = 2'-O-methyluridine(2552) in 23S rRNA + S-adenosyl-L-homocysteine + H(+). In terms of biological role, specifically methylates the uridine in position 2552 of 23S rRNA at the 2'-O position of the ribose in the fully assembled 50S ribosomal subunit. In Francisella tularensis subsp. holarctica (strain FTNF002-00 / FTA), this protein is Ribosomal RNA large subunit methyltransferase E.